The following is a 344-amino-acid chain: MKEELHAIRDEAIASVEEAKDMKSLQDLKVKYLGKKGSLTSVLRGMGKLSKEERPVIGEIANQVREQITAALDQKTEKMEEEALNEKLEKETIDVTLPGNPVHIGGKHLLTRVVEEIEDLFIGMGYEVKEGPEVETDYFNFEALNLPKNHPARDMQDTFFITNELLLRTQTSPVQARTMQAYNGEKPIKMICPGKVYRRDTDDATHSHQFRQIEGLVIDKDITLSDLKGTLDIFAKKMFGEDREIRLRPSFFPFTEPSVEMDVSCKVCSGQGCSVCKQTGWIEILGGGMVHPRVLEMSGYDPKVYSGFAFGMGQERIAMLKYGVNDIRHFYTNDIRFLTQFHQA.

Glu-256 is a Mg(2+) binding site.

Belongs to the class-II aminoacyl-tRNA synthetase family. Phe-tRNA synthetase alpha subunit type 1 subfamily. Tetramer of two alpha and two beta subunits. Mg(2+) is required as a cofactor.

It is found in the cytoplasm. The catalysed reaction is tRNA(Phe) + L-phenylalanine + ATP = L-phenylalanyl-tRNA(Phe) + AMP + diphosphate + H(+). This chain is Phenylalanine--tRNA ligase alpha subunit, found in Oceanobacillus iheyensis (strain DSM 14371 / CIP 107618 / JCM 11309 / KCTC 3954 / HTE831).